The sequence spans 424 residues: Adenylosuccinate synthetase (424 aa).

GTP-binding positions include 12 to 18 and 40 to 42; these read GDEGKGK and GHT. D13 acts as the Proton acceptor in catalysis. Residues D13 and G40 each coordinate Mg(2+). IMP-binding positions include 13–16, 38–41, T130, R144, N220, T235, and R299; these read DEGK and NAGH. Catalysis depends on H41, which acts as the Proton donor. Substrate is bound at residue 295–301; it reads VTTGRRR. GTP is bound by residues R301, 327–329, and 412–414; these read KLD and GTG.

Belongs to the adenylosuccinate synthetase family. Homodimer. Mg(2+) is required as a cofactor.

It localises to the cytoplasm. The catalysed reaction is IMP + L-aspartate + GTP = N(6)-(1,2-dicarboxyethyl)-AMP + GDP + phosphate + 2 H(+). It participates in purine metabolism; AMP biosynthesis via de novo pathway; AMP from IMP: step 1/2. In terms of biological role, plays an important role in the de novo pathway and in the salvage pathway of purine nucleotide biosynthesis. Catalyzes the first committed step in the biosynthesis of AMP from IMP. The chain is Adenylosuccinate synthetase from Aspergillus niger (strain ATCC MYA-4892 / CBS 513.88 / FGSC A1513).